We begin with the raw amino-acid sequence, 142 residues long: Small ribosomal subunit protein uS12 (142 aa).

Belongs to the universal ribosomal protein uS12 family. In terms of assembly, part of the 30S ribosomal subunit.

In terms of biological role, with S4 and S5 plays an important role in translational accuracy. Located at the interface of the 30S and 50S subunits. This chain is Small ribosomal subunit protein uS12, found in Methanococcoides burtonii (strain DSM 6242 / NBRC 107633 / OCM 468 / ACE-M).